A 395-amino-acid chain; its full sequence is Hdr-like menaquinol oxidoreductase integral membrane subunit (395 aa).

The next 10 membrane-spanning stretches (helical) occupy residues 15–35 (YFALVIILAAVTALGFYAYVL), 57–77 (IPYFIGLSAGSLIVSALAGVF), 88–108 (IAAYMAAAWIIAAILSIALDI), 126–146 (IFSWNAFLYSSYFVICSIYLL), 158–178 (FMAGLAVFWAVLVHSGTGAIY), 196–216 (FIVCAITSGLGLLLANLYFTF), 231–251 (LALIFAGLMMVLGYFLAVEGL), 274–294 (VFWSFWLLVIFGIAIPIIIVL), 305–325 (ITFAGILHAALVFAERFYLII), and 364–384 (IGLIAMVYLIFVVGVKLFALI).

This sequence belongs to the NrfD family. As to quaternary structure, consists of five subunits: an integral membrane subunit, a cytochrome b-like subunit, a cytochrome c subunit and two iron-sulfur subunits.

It localises to the cell membrane. Its function is as follows. Has menaquinol-oxidizing activity. HmeB subunit may function as a menaquinol-oxidizing site. HmeA, HmeB and HmeE subunits may together catalyze electron transfer from menaquinol to cytochrome c. The chain is Hdr-like menaquinol oxidoreductase integral membrane subunit (hmeB) from Archaeoglobus fulgidus (strain ATCC 49558 / DSM 4304 / JCM 9628 / NBRC 100126 / VC-16).